The following is a 382-amino-acid chain: MKSLSILGSTGSIGLSTLDVVRRHPERFSIAALAEGHDVEMLLKQIDEFRPSLVSVRDEASRERLKGMLGDHKPEILCGLEGAAEVAAVDGADMVVSAIVGAAGLVPTVRAIEAGKDIALANKETLVVAGQLVSDLVKKHDVKLLPVDSEHSAIFQSLVGHRTEDIERIILTASGGPFRKTPAEELKNVGPEQALKHPQWSMGAKITIDSATLMNKGLEVIEAHWLFDMPAEKIGVVVHPQSIIHSMVEYIDGCVIAQLGVPDMRAPIAYALAWPERCETGIGKLDLTKVATLTFEEPDMERFPALRLAFDALKAGQTYPAVLNAANEIAVAAFLDKKIGFTDIAGTVDKTMQAHEAWTPITLEEYLQADKWARETARQLIG.

Residues threonine 10, glycine 11, serine 12, isoleucine 13, glycine 36, and asparagine 122 each coordinate NADPH. Residue lysine 123 participates in 1-deoxy-D-xylulose 5-phosphate binding. An NADPH-binding site is contributed by glutamate 124. A Mn(2+)-binding site is contributed by aspartate 148. Serine 149, glutamate 150, serine 174, and histidine 197 together coordinate 1-deoxy-D-xylulose 5-phosphate. Mn(2+) is bound at residue glutamate 150. Glycine 203 contributes to the NADPH binding site. Positions 210, 215, 216, and 219 each coordinate 1-deoxy-D-xylulose 5-phosphate. A Mn(2+)-binding site is contributed by glutamate 219.

This sequence belongs to the DXR family. Requires Mg(2+) as cofactor. Mn(2+) serves as cofactor.

It catalyses the reaction 2-C-methyl-D-erythritol 4-phosphate + NADP(+) = 1-deoxy-D-xylulose 5-phosphate + NADPH + H(+). It participates in isoprenoid biosynthesis; isopentenyl diphosphate biosynthesis via DXP pathway; isopentenyl diphosphate from 1-deoxy-D-xylulose 5-phosphate: step 1/6. Its function is as follows. Catalyzes the NADPH-dependent rearrangement and reduction of 1-deoxy-D-xylulose-5-phosphate (DXP) to 2-C-methyl-D-erythritol 4-phosphate (MEP). This chain is 1-deoxy-D-xylulose 5-phosphate reductoisomerase, found in Chlorobaculum tepidum (strain ATCC 49652 / DSM 12025 / NBRC 103806 / TLS) (Chlorobium tepidum).